A 293-amino-acid chain; its full sequence is MIKSGFITIIGRPNVGKSTLLNSIMGEKLSIVSCKPQTTRNSIQTILTRDDFQLIFVDTPGIHKPKHKLGNYMVKVAESSVKDVDLILFLITPDVEVGKGDRYILEQLKKENIPVFLVVNKIDENPQEKVAQTLKNYSEIFDFAEIIPISALKQKNVKELVELMVKYMPEGPKYYPDDMITDKQEKFVVSEIIREKALRLLSKEVPHGIAVDILSMKKNSKGLYNIEATILCEKESHKGIIIGKKGAMLKKISTYAREDIEKFLDSKVYLEVWVKVKKEWRDSDRLLKELGYK.

Positions 3–170 (KSGFITIIGR…VELMVKYMPE (168 aa)) constitute an Era-type G domain. The interval 11–18 (GRPNVGKS) is G1. 11–18 (GRPNVGKS) lines the GTP pocket. The segment at 37 to 41 (QTTRN) is G2. The G3 stretch occupies residues 58 to 61 (DTPG). Residues 58–62 (DTPGI) and 120–123 (NKID) each bind GTP. The G4 stretch occupies residues 120–123 (NKID). A G5 region spans residues 149–151 (ISA). The region spanning 201-278 (LSKEVPHGIA…YLEVWVKVKK (78 aa)) is the KH type-2 domain.

The protein belongs to the TRAFAC class TrmE-Era-EngA-EngB-Septin-like GTPase superfamily. Era GTPase family. As to quaternary structure, monomer.

The protein resides in the cytoplasm. It is found in the cell membrane. Its function is as follows. An essential GTPase that binds both GDP and GTP, with rapid nucleotide exchange. Plays a role in 16S rRNA processing and 30S ribosomal subunit biogenesis and possibly also in cell cycle regulation and energy metabolism. This Clostridium kluyveri (strain NBRC 12016) protein is GTPase Era.